The primary structure comprises 475 residues: MKKLKINYLFIGILTLLLAAALWPSIPWFGKTENHIAAIQARGVLRVSTIDSPLTYSVINGKKYGLDYELAQQFANYLGVKLKVTVRQNISQLFDDLDNGNADLLAAGLVYDSARVKNYQPGPMYYSVSQQLVYRVGQYRPRSLATVNENQLTIAPGHVVVNDLQRLKETKFPDLSWKVDDKKGSTTLLEEVISGKLDYTIADSVAISLFQRVHPELAVALDVTDEQPVTWFSRLDDDNTLSAALLDFFNSINEDGSLARIEEKYLGHGDDFDYVDTRSFLRAVDNVLPELEPLFKKYAKEIDWRLLAAISYQESHWDPLATSPTGVRGLMMLTKNTAQSLGLTDRTDAEQSISGGARYLEDMMAKVPETVPEDERIWFALAAYNMGYAHMLDARSLTVKTKGNPDSWTDVKQRLPLLSQKPYYSKLTYGYARGHEAYAYVENIRKYQISLVGYLQEKEKQEAEAMKLAQDYPAV.

A signal peptide spans 1–30; it reads MKKLKINYLFIGILTLLLAAALWPSIPWFG. The non-LT domain stretch occupies residues 31–269; sequence KTENHIAAIQ…RIEEKYLGHG (239 aa). The segment at 270 to 475 is LT domain; the sequence is DDFDYVDTRS…MKLAQDYPAV (206 aa). Glu314 is a catalytic residue.

The protein in the N-terminal section; belongs to the bacterial solute-binding protein 3 family. It in the C-terminal section; belongs to the transglycosylase Slt family.

Its subcellular location is the cell outer membrane. The enzyme catalyses Exolytic cleavage of the (1-&gt;4)-beta-glycosidic linkage between N-acetylmuramic acid (MurNAc) and N-acetylglucosamine (GlcNAc) residues in peptidoglycan, from either the reducing or the non-reducing ends of the peptidoglycan chains, with concomitant formation of a 1,6-anhydrobond in the MurNAc residue.. In terms of biological role, murein-degrading enzyme that degrades murein glycan strands and insoluble, high-molecular weight murein sacculi, with the concomitant formation of a 1,6-anhydromuramoyl product. Lytic transglycosylases (LTs) play an integral role in the metabolism of the peptidoglycan (PG) sacculus. Their lytic action creates space within the PG sacculus to allow for its expansion as well as for the insertion of various structures such as secretion systems and flagella. The sequence is that of Membrane-bound lytic murein transglycosylase F from Salmonella typhi.